The following is a 317-amino-acid chain: Beta-ketoacyl-[acyl-carrier-protein] synthase III (317 aa).

Residues Cys-112 and His-244 contribute to the active site. The tract at residues 245–249 (QANIR) is ACP-binding. Asn-274 is a catalytic residue.

This sequence belongs to the thiolase-like superfamily. FabH family. Homodimer.

It is found in the cytoplasm. It carries out the reaction malonyl-[ACP] + acetyl-CoA + H(+) = 3-oxobutanoyl-[ACP] + CO2 + CoA. Its pathway is lipid metabolism; fatty acid biosynthesis. In terms of biological role, catalyzes the condensation reaction of fatty acid synthesis by the addition to an acyl acceptor of two carbons from malonyl-ACP. Catalyzes the first condensation reaction which initiates fatty acid synthesis and may therefore play a role in governing the total rate of fatty acid production. Possesses both acetoacetyl-ACP synthase and acetyl transacylase activities. Its substrate specificity determines the biosynthesis of branched-chain and/or straight-chain of fatty acids. The sequence is that of Beta-ketoacyl-[acyl-carrier-protein] synthase III from Rickettsia akari (strain Hartford).